We begin with the raw amino-acid sequence, 492 residues long: Glutamyl-tRNA(Gln) amidotransferase subunit A, mitochondrial (492 aa).

Residues Lys-78 and Ser-159 each act as charge relay system in the active site. Ser-183 serves as the catalytic Acyl-ester intermediate.

This sequence belongs to the amidase family. GatA subfamily. Subunit of the heterotrimeric GatCAB amidotransferase (AdT) complex, composed of A, B and C subunits.

The protein resides in the mitochondrion. The enzyme catalyses L-glutamyl-tRNA(Gln) + L-glutamine + ATP + H2O = L-glutaminyl-tRNA(Gln) + L-glutamate + ADP + phosphate + H(+). Its function is as follows. Allows the formation of correctly charged Gln-tRNA(Gln) through the transamidation of misacylated Glu-tRNA(Gln) in the mitochondria. The reaction takes place in the presence of glutamine and ATP through an activated gamma-phospho-Glu-tRNA(Gln). The protein is Glutamyl-tRNA(Gln) amidotransferase subunit A, mitochondrial of Anopheles gambiae (African malaria mosquito).